A 756-amino-acid polypeptide reads, in one-letter code: Conserved oligomeric Golgi complex subunit 2 (756 aa).

The stretch at 62 to 82 (RSELRSHLASLNRELVDLINR) forms a coiled coil. A disordered region spans residues 173 to 199 (WQNEDANSMGRSSMNDENSTQQDGTTM).

Belongs to the COG2 family. In terms of assembly, homodimer. Component of the conserved oligomeric Golgi complex which is composed of eight different subunits and is required for normal Golgi morphology and localization. Binds to COG3 and COG4. Interacts with FPP3/VETH1 and FPP2/VETH2; this interaction promotes the association between cortical microtubules and EXO70A1. Binds to SEC15B, and, possibly, with EXO70A1, SEC3A and SEC10A.

It is found in the golgi apparatus membrane. Its function is as follows. Required for normal Golgi morphology and function. Ensures, when in complex with FPP3/VETH1 and FPP2/VETH2, the correct secondary cell wall (SCW) deposition pattern by recruiting exocyst components to cortical microtubules in xylem cells during secondary cell wall deposition. In Arabidopsis thaliana (Mouse-ear cress), this protein is Conserved oligomeric Golgi complex subunit 2.